We begin with the raw amino-acid sequence, 362 residues long: Beta-ketoacyl-[acyl-carrier-protein] synthase III 2 (362 aa).

Active-site residues include Cys-113 and His-251. Residues 252-256 form an ACP-binding region; it reads QANIR. Residue Asn-281 is part of the active site.

Belongs to the thiolase-like superfamily. FabH family. As to quaternary structure, homodimer.

The protein resides in the cytoplasm. The catalysed reaction is malonyl-[ACP] + acetyl-CoA + H(+) = 3-oxobutanoyl-[ACP] + CO2 + CoA. Its pathway is lipid metabolism; fatty acid biosynthesis. Functionally, catalyzes the condensation reaction of fatty acid synthesis by the addition to an acyl acceptor of two carbons from malonyl-ACP. Catalyzes the first condensation reaction which initiates fatty acid synthesis and may therefore play a role in governing the total rate of fatty acid production. Possesses both acetoacetyl-ACP synthase and acetyl transacylase activities. Its substrate specificity determines the biosynthesis of branched-chain and/or straight-chain of fatty acids. The protein is Beta-ketoacyl-[acyl-carrier-protein] synthase III 2 of Vibrio cholerae serotype O1 (strain ATCC 39315 / El Tor Inaba N16961).